The chain runs to 200 residues: Cytochrome c biogenesis ATP-binding export protein CcmA (200 aa).

The ABC transporter domain occupies 3–199; that stretch reads LSGRRVICVR…DSRELRIGGV (197 aa). Residue 35–42 coordinates ATP; that stretch reads GRNGSGKT.

Belongs to the ABC transporter superfamily. CcmA exporter (TC 3.A.1.107) family. In terms of assembly, the complex is composed of two ATP-binding proteins (CcmA) and two transmembrane proteins (CcmB).

It localises to the cell inner membrane. It carries out the reaction heme b(in) + ATP + H2O = heme b(out) + ADP + phosphate + H(+). Functionally, part of the ABC transporter complex CcmAB involved in the biogenesis of c-type cytochromes; once thought to export heme, this seems not to be the case, but its exact role is uncertain. Responsible for energy coupling to the transport system. The sequence is that of Cytochrome c biogenesis ATP-binding export protein CcmA from Bradyrhizobium diazoefficiens (strain JCM 10833 / BCRC 13528 / IAM 13628 / NBRC 14792 / USDA 110).